The chain runs to 366 residues: 3-dehydroquinate synthase (366 aa).

NAD(+) contacts are provided by residues 71 to 76, 105 to 109, 129 to 130, lysine 142, lysine 151, and 169 to 172; these read DGEQYK, GVIGD, TT, and CLKT. The Zn(2+) site is built by glutamate 184, histidine 247, and histidine 264.

This sequence belongs to the sugar phosphate cyclases superfamily. Dehydroquinate synthase family. The cofactor is Co(2+). Zn(2+) is required as a cofactor. Requires NAD(+) as cofactor.

The protein resides in the cytoplasm. The catalysed reaction is 7-phospho-2-dehydro-3-deoxy-D-arabino-heptonate = 3-dehydroquinate + phosphate. It participates in metabolic intermediate biosynthesis; chorismate biosynthesis; chorismate from D-erythrose 4-phosphate and phosphoenolpyruvate: step 2/7. Its function is as follows. Catalyzes the conversion of 3-deoxy-D-arabino-heptulosonate 7-phosphate (DAHP) to dehydroquinate (DHQ). The chain is 3-dehydroquinate synthase from Serratia proteamaculans (strain 568).